We begin with the raw amino-acid sequence, 227 residues long: Sensory transduction protein RegX3 (227 aa).

The 114-residue stretch at 3-116 (SVLIVEDEES…ELIARIRAVL (114 aa)) folds into the Response regulatory domain. D52 carries the post-translational modification 4-aspartylphosphate. Positions 128-227 (DGVLESGPVR…VRGLGYKLEG (100 aa)) form a DNA-binding region, ompR/PhoB-type.

In terms of processing, phosphorylated by SenX3.

In terms of biological role, member of the two-component regulatory system SenX3/RegX3. Specifically binds to the promoter region of the senX3-regX3 operon. The polypeptide is Sensory transduction protein RegX3 (Mycobacterium bovis (strain ATCC BAA-935 / AF2122/97)).